A 260-amino-acid polypeptide reads, in one-letter code: Hydroxyethylthiazole kinase 1 (260 aa).

Met-39 provides a ligand contact to substrate. Arg-115 and Thr-160 together coordinate ATP. Gly-187 is a substrate binding site.

Belongs to the Thz kinase family. Requires Mg(2+) as cofactor.

The catalysed reaction is 5-(2-hydroxyethyl)-4-methylthiazole + ATP = 4-methyl-5-(2-phosphooxyethyl)-thiazole + ADP + H(+). It participates in cofactor biosynthesis; thiamine diphosphate biosynthesis; 4-methyl-5-(2-phosphoethyl)-thiazole from 5-(2-hydroxyethyl)-4-methylthiazole: step 1/1. Catalyzes the phosphorylation of the hydroxyl group of 4-methyl-5-beta-hydroxyethylthiazole (THZ). This is Hydroxyethylthiazole kinase 1 from Streptococcus pneumoniae (strain P1031).